A 382-amino-acid polypeptide reads, in one-letter code: Dual-specificity RNA methyltransferase RlmN (382 aa).

The active-site Proton acceptor is the Glu91. One can recognise a Radical SAM core domain in the interval 97–339 (ETDRGTLCIS…TTVRKTRGDD (243 aa)). Cys104 and Cys344 are oxidised to a cystine. Positions 111, 115, and 118 each coordinate [4Fe-4S] cluster. Residues 165 to 166 (GE), Ser197, 219 to 221 (SLH), and Asn301 each bind S-adenosyl-L-methionine. Cys344 acts as the S-methylcysteine intermediate in catalysis.

This sequence belongs to the radical SAM superfamily. RlmN family. [4Fe-4S] cluster is required as a cofactor.

The protein resides in the cytoplasm. The enzyme catalyses adenosine(2503) in 23S rRNA + 2 reduced [2Fe-2S]-[ferredoxin] + 2 S-adenosyl-L-methionine = 2-methyladenosine(2503) in 23S rRNA + 5'-deoxyadenosine + L-methionine + 2 oxidized [2Fe-2S]-[ferredoxin] + S-adenosyl-L-homocysteine. It carries out the reaction adenosine(37) in tRNA + 2 reduced [2Fe-2S]-[ferredoxin] + 2 S-adenosyl-L-methionine = 2-methyladenosine(37) in tRNA + 5'-deoxyadenosine + L-methionine + 2 oxidized [2Fe-2S]-[ferredoxin] + S-adenosyl-L-homocysteine. Its function is as follows. Specifically methylates position 2 of adenine 2503 in 23S rRNA and position 2 of adenine 37 in tRNAs. m2A2503 modification seems to play a crucial role in the proofreading step occurring at the peptidyl transferase center and thus would serve to optimize ribosomal fidelity. This is Dual-specificity RNA methyltransferase RlmN from Polaromonas naphthalenivorans (strain CJ2).